Consider the following 104-residue polypeptide: Large ribosomal subunit protein uL24 (104 aa).

It belongs to the universal ribosomal protein uL24 family. Part of the 50S ribosomal subunit.

In terms of biological role, one of two assembly initiator proteins, it binds directly to the 5'-end of the 23S rRNA, where it nucleates assembly of the 50S subunit. Functionally, one of the proteins that surrounds the polypeptide exit tunnel on the outside of the subunit. In Enterobacter sp. (strain 638), this protein is Large ribosomal subunit protein uL24.